Here is a 534-residue protein sequence, read N- to C-terminus: Protein BFR2 (534 aa).

The disordered stretch occupies residues 27–148 (ENASLFQHNE…ETEEAQQKRH (122 aa)). Phosphoserine occurs at positions 41 and 44. A compositionally biased stretch (basic and acidic residues) spans 52–77 (EETKKAHYLEVEKSKLRAEKGLELND). Residues 86-161 (SRQALYEEVS…KLIQQETKQA (76 aa)) adopt a coiled-coil conformation. Acidic residues-rich tracts occupy residues 93 to 114 (EVSENEDEEEEEEEEEEKEEDA) and 121 to 142 (SEDEEVEIDEEESDADGGETEE). Phosphoserine is present on residues S366, S372, and S379.

The protein belongs to the AATF family.

The protein localises to the nucleus. Its subcellular location is the nucleolus. Its function is as follows. Involved in endoplasmic reticulum to Golgi transport. Involved in a protein-transport step blocked by brefeldin A, which disrupts the Golgi apparatus and its incoming protein flux. May also be involved for mass growth or cell proliferation. In Saccharomyces cerevisiae (strain ATCC 204508 / S288c) (Baker's yeast), this protein is Protein BFR2 (BFR2).